The primary structure comprises 841 residues: Alpha-glucan phosphorylase 2, cytosolic (841 aa).

Positions 1–24 (MANANGKAATSLPEKISAKANPEA) are disordered. Lys687 bears the N6-(pyridoxal phosphate)lysine mark.

This sequence belongs to the glycogen phosphorylase family. Requires pyridoxal 5'-phosphate as cofactor.

The protein localises to the cytoplasm. It catalyses the reaction [(1-&gt;4)-alpha-D-glucosyl](n) + phosphate = [(1-&gt;4)-alpha-D-glucosyl](n-1) + alpha-D-glucose 1-phosphate. Phosphorylase is an important allosteric enzyme in carbohydrate metabolism. Enzymes from different sources differ in their regulatory mechanisms and in their natural substrates. However, all known phosphorylases share catalytic and structural properties. This is Alpha-glucan phosphorylase 2, cytosolic (PHS2) from Arabidopsis thaliana (Mouse-ear cress).